A 332-amino-acid polypeptide reads, in one-letter code: UPF0194 membrane protein YbhG (332 aa).

Residues 1–16 form the signal peptide; sequence MMKKPVVIGLAVVVLA. The stretch at 107 to 209 forms a coiled coil; that stretch reads NEEIAQAAAA…LNLQDSTLIA (103 aa).

The protein belongs to the UPF0194 family.

It is found in the periplasm. The chain is UPF0194 membrane protein YbhG from Escherichia coli (strain K12 / MC4100 / BW2952).